A 241-amino-acid polypeptide reads, in one-letter code: Uracil-DNA glycosylase (241 aa).

D68 (proton acceptor) is an active-site residue.

This sequence belongs to the uracil-DNA glycosylase (UDG) superfamily. UNG family.

The protein localises to the cytoplasm. The enzyme catalyses Hydrolyzes single-stranded DNA or mismatched double-stranded DNA and polynucleotides, releasing free uracil.. Excises uracil residues from the DNA which can arise as a result of misincorporation of dUMP residues by DNA polymerase or due to deamination of cytosine. This is Uracil-DNA glycosylase from Sinorhizobium medicae (strain WSM419) (Ensifer medicae).